The following is a 363-amino-acid chain: Holliday junction branch migration complex subunit RuvB (363 aa).

The tract at residues 1 to 32 is disordered; that stretch reads MSDVERTEFEIPGGIPPRRNGGQGRAADTNVD. The interval 27–207 is large ATPase domain (RuvB-L); sequence ADTNVDANLK…FGFTAQMEFY (181 aa). ATP-binding positions include leucine 46, arginine 47, glycine 88, lysine 91, threonine 92, threonine 93, 154–156, arginine 197, tyrosine 207, and arginine 244; that span reads EDF. Threonine 92 serves as a coordination point for Mg(2+). The tract at residues 208–278 is small ATPAse domain (RuvB-S); that stretch reads DVPDLTKVVK…AANAALIVFD (71 aa). Residues 281–363 are head domain (RuvB-H); that stretch reads EVGLDRLDRA…EPPEGTIGDY (83 aa). Arginine 336 and arginine 341 together coordinate DNA.

It belongs to the RuvB family. Homohexamer. Forms an RuvA(8)-RuvB(12)-Holliday junction (HJ) complex. HJ DNA is sandwiched between 2 RuvA tetramers; dsDNA enters through RuvA and exits via RuvB. An RuvB hexamer assembles on each DNA strand where it exits the tetramer. Each RuvB hexamer is contacted by two RuvA subunits (via domain III) on 2 adjacent RuvB subunits; this complex drives branch migration. In the full resolvosome a probable DNA-RuvA(4)-RuvB(12)-RuvC(2) complex forms which resolves the HJ.

It localises to the cytoplasm. The catalysed reaction is ATP + H2O = ADP + phosphate + H(+). The RuvA-RuvB-RuvC complex processes Holliday junction (HJ) DNA during genetic recombination and DNA repair, while the RuvA-RuvB complex plays an important role in the rescue of blocked DNA replication forks via replication fork reversal (RFR). RuvA specifically binds to HJ cruciform DNA, conferring on it an open structure. The RuvB hexamer acts as an ATP-dependent pump, pulling dsDNA into and through the RuvAB complex. RuvB forms 2 homohexamers on either side of HJ DNA bound by 1 or 2 RuvA tetramers; 4 subunits per hexamer contact DNA at a time. Coordinated motions by a converter formed by DNA-disengaged RuvB subunits stimulates ATP hydrolysis and nucleotide exchange. Immobilization of the converter enables RuvB to convert the ATP-contained energy into a lever motion, pulling 2 nucleotides of DNA out of the RuvA tetramer per ATP hydrolyzed, thus driving DNA branch migration. The RuvB motors rotate together with the DNA substrate, which together with the progressing nucleotide cycle form the mechanistic basis for DNA recombination by continuous HJ branch migration. Branch migration allows RuvC to scan DNA until it finds its consensus sequence, where it cleaves and resolves cruciform DNA. In Corynebacterium glutamicum (strain R), this protein is Holliday junction branch migration complex subunit RuvB.